The primary structure comprises 487 residues: NGFI-A-binding protein 1 (487 aa).

Residues 4–82 form an NCD1 region; that stretch reads ALPRTLGELQ…RDWVTNPGLF (79 aa). Glycyl lysine isopeptide (Lys-Gly) (interchain with G-Cter in SUMO2) cross-links involve residues Lys126, Lys129, and Lys143. The segment at 162–188 is disordered; it reads QGHHATESEHSLSPADLGSPASPKESS. Ser172 and Ser183 each carry phosphoserine. A Glycyl lysine isopeptide (Lys-Gly) (interchain with G-Cter in SUMO2) cross-link involves residue Lys212. The tract at residues 221–310 is NCD2; that stretch reads LLKTNKKLAK…ARQISREVTY (90 aa). A necessary for nuclear localization region spans residues 307–338; the sequence is EVTYKYTYRTTKSKCGERDELSPKRIKVEDGF. Ser328 carries the phosphoserine modification. Residue Lys333 forms a Glycyl lysine isopeptide (Lys-Gly) (interchain with G-Cter in SUMO1); alternate linkage. Lys333 participates in a covalent cross-link: Glycyl lysine isopeptide (Lys-Gly) (interchain with G-Cter in SUMO2); alternate. Residues Lys355, Lys369, and Lys373 each participate in a glycyl lysine isopeptide (Lys-Gly) (interchain with G-Cter in SUMO2) cross-link. The segment at 399 to 434 is disordered; the sequence is YRQSSEEHSPNGLTSDNSDGQGERPLNLRMPNLQNR. Ser407 carries the post-translational modification Phosphoserine. Polar residues predominate over residues 409 to 418; that stretch reads NGLTSDNSDG. Residues Lys454, Lys465, and Lys477 each participate in a glycyl lysine isopeptide (Lys-Gly) (interchain with G-Cter in SUMO2) cross-link. Lys480 participates in a covalent cross-link: Glycyl lysine isopeptide (Lys-Gly) (interchain with G-Cter in SUMO1); alternate. A Glycyl lysine isopeptide (Lys-Gly) (interchain with G-Cter in SUMO2); alternate cross-link involves residue Lys480.

It belongs to the NAB family. Homomultimers may associate with EGR1 bound to DNA. Isoform Short is found in myeloid leukemia cell line KG-1.

The protein resides in the nucleus. Acts as a transcriptional repressor for zinc finger transcription factors EGR1 and EGR2. The sequence is that of NGFI-A-binding protein 1 (NAB1) from Homo sapiens (Human).